Consider the following 96-residue polypeptide: Transmembrane protein PMIS2 (96 aa).

Transmembrane regions (helical) follow at residues 31 to 51 (VMLALLAMILFLPFGILAIYF) and 76 to 96 (WFNMLAIVAFVGIIYILVLVL).

It belongs to the CD225/Dispanin family. Specifically expressed in testis.

The protein localises to the membrane. In terms of biological role, may play a role in spermatozoa mobility. The protein is Transmembrane protein PMIS2 of Mus musculus (Mouse).